We begin with the raw amino-acid sequence, 1134 residues long: Protocadherin-18 (1134 aa).

A signal peptide spans 1-27; the sequence is MYQMNAKMHFTFVFALLVVSFNLDVLG. Cadherin domains are found at residues 28–137, 138–246, 247–354, 361–465, 466–576, and 582–697; these read KNLK…SPQF, SRSL…SPAF, EQQS…KPEI, PGKE…PPHF, QRSR…VPVV, and RNNT…APLD. At 28-699 the chain is on the extracellular side; that stretch reads KNLKYRIYEE…SVSQAPLDVS (672 aa). The N-linked (GlcNAc...) asparagine glycan is linked to asparagine 103. Asparagine 269 carries an N-linked (GlcNAc...) asparagine glycan. An N-linked (GlcNAc...) asparagine glycan is attached at asparagine 559. The chain crosses the membrane as a helical span at residues 700-720; sequence MIIIISLGAICAVLLVIMVLF. The Cytoplasmic segment spans residues 721 to 1134; sequence ATRCNREKKD…NKLLQDVRQS (414 aa). Disordered stretches follow at residues 768–800, 868–888, and 941–1003; these read TLPI…NSHQ, SLKD…DLGR, and DYRS…TSSL. Over residues 791–800 the composition is skewed to polar residues; the sequence is GSRQSHNSHQ. A compositionally biased stretch (basic and acidic residues) spans 868 to 877; sequence SLKDSGRGDS. The segment at 892–1134 is interaction with DAB1; the sequence is IDRLLGEGFS…NKLLQDVRQS (243 aa).

As to quaternary structure, interacts with DAB1.

The protein localises to the cell membrane. Its function is as follows. Potential calcium-dependent cell-adhesion protein. The polypeptide is Protocadherin-18 (PCDH18) (Bos taurus (Bovine)).